Reading from the N-terminus, the 97-residue chain is uncharacterized protein (97 aa).

The interval 38–97 is disordered; the sequence is TSPPDWNKFSGKVSINEPTTSKSKSKSTSTSTSTSTSTSTSTSTSSSTSSTSSTTSSINK. The span at 56–97 shows a compositional bias: low complexity; the sequence is TTSKSKSKSTSTSTSTSTSTSTSTSTSSSTSSTSSTTSSINK.

This is an uncharacterized protein from Dictyostelium discoideum (Social amoeba).